We begin with the raw amino-acid sequence, 141 residues long: VLSPADKTNVKAAWGKVGAHAGDYGAEALERMFLSFPTTKTYFPHFDLSHGSAQVKGHGKKVADALTNAVAHVDDMPNALSALSDLHAHKLRVDPVNFKLLSHCLLVTLAAHLPAEFTPAVHASLDKFLASVSTVLTSKYR.

Positions 1 to 141 constitute a Globin domain; that stretch reads VLSPADKTNV…VSTVLTSKYR (141 aa). Position 3 is a phosphoserine (serine 3). An N6-succinyllysine modification is found at lysine 7. At threonine 8 the chain carries Phosphothreonine. Lysine 11 bears the N6-succinyllysine mark. Position 16 is an N6-acetyllysine; alternate (lysine 16). Position 16 is an N6-succinyllysine; alternate (lysine 16). Tyrosine 24 carries the post-translational modification Phosphotyrosine. Serine 35 is subject to Phosphoserine. Lysine 40 is modified (N6-succinyllysine). Residue serine 49 is modified to Phosphoserine. Histidine 58 lines the O2 pocket. Histidine 87 lines the heme b pocket. Residue serine 102 is modified to Phosphoserine. A Phosphothreonine modification is found at threonine 108. Residues serine 124 and serine 131 each carry the phosphoserine modification. Phosphothreonine occurs at positions 134 and 137. Serine 138 is subject to Phosphoserine.

The protein belongs to the globin family. Heterotetramer of two alpha chains and two beta chains. As to expression, red blood cells.

Involved in oxygen transport from the lung to the various peripheral tissues. Its function is as follows. Hemopressin acts as an antagonist peptide of the cannabinoid receptor CNR1. Hemopressin-binding efficiently blocks cannabinoid receptor CNR1 and subsequent signaling. The protein is Hemoglobin subunit alpha (HBA) of Gorilla gorilla gorilla (Western lowland gorilla).